A 3164-amino-acid polypeptide reads, in one-letter code: Large tegument protein deneddylase (3164 aa).

The deubiquitination activity stretch occupies residues 1-273 (MGGGNNTNPG…SETYLQDEAF (273 aa)). In terms of domain architecture, Peptidase C76 spans 45–263 (VVTGARNQFA…TAAALHLYGA (219 aa)). Active-site residues include cysteine 65, aspartate 197, and histidine 199. Positions 289–508 (AGLGEPCVGV…GEDDGPTVPA (220 aa)) are disordered. A compositionally biased stretch (pro residues) spans 308–321 (GPHPPTAAQSPPPT). Basic and acidic residues predominate over residues 343 to 353 (PEAKRPNRAPD). The segment covering 365 to 390 (PTDPPSADPPSADPPSAIPPPPPSAP) has biased composition (pro residues). Residues 416–432 (GRHRARYSAGLPKRRRP) show a composition bias toward basic residues. Residues 426–432 (LPKRRRP) form a nuclear localization signal region. An interaction with inner tegument protein region spans residues 579-609 (LELCVIFFFERVLAFLIENGARTHTQAGVAG). Residues 579–609 (LELCVIFFFERVLAFLIENGARTHTQAGVAG) are interaction with UL37. Disordered regions lie at residues 2296 to 2318 (QTLSPSGGREASPPAPPNALYRP), 2518 to 2552 (HPVYQRAPDDQSPSVPNPTPGPVDLVGAEGSLGPG), and 2583 to 3020 (ASDD…SLSG). Pro residues predominate over residues 2653 to 2667 (QSSPAPPDATAPRPP). Over residues 2668–2680 (ASSRASAASSSGS) the composition is skewed to low complexity. Residues 2681–2690 (RARRHRRARS) are compositionally biased toward basic residues. The segment covering 2722–2732 (PPAPPKPPEPA) has biased composition (pro residues). A compositionally biased stretch (low complexity) spans 2834-2843 (PAEPTSSSPA). Pro residues predominate over residues 2844–2866 (GPSPPPPAVQPVAPPPTSGPPPT). Residues 2886 to 2897 (TRQPVATPTTSA) are compositionally biased toward polar residues. Repeat copies occupy residues 2911-2912 (PQ), 2913-2914 (PQ), 2915-2916 (PQ), 2917-2918 (PQ), 2919-2920 (PQ), 2921-2922 (PQ), 2923-2924 (PQ), 2925-2926 (PQ), 2927-2928 (PQ), 2929-2930 (PQ), 2931-2932 (PQ), 2933-2934 (PQ), 2935-2936 (PQ), 2937-2938 (PQ), 2939-2940 (PQ), 2941-2942 (PQ), 2943-2944 (PQ), 2945-2946 (PQ), 2947-2948 (PQ), 2949-2950 (PQ), 2951-2952 (PQ), 2953-2954 (PQ), 2955-2956 (PQ), 2957-2958 (PQ), 2959-2960 (PQ), 2961-2962 (PQ), 2963-2964 (PQ), 2965-2966 (PQ), 2967-2968 (PQ), 2969-2970 (PQ), 2971-2972 (PQ), 2973-2974 (PQ), 2975-2976 (PQ), 2977-2978 (PQ), and 2979-2980 (PQ). The interval 2911-2980 (PQPQPQPQPQ…PQPQPQPQPQ (70 aa)) is 35 X 2 AA tandem repeats of P-Q. Residues 2912–2978 (QPQPQPQPQP…PQPQPQPQPQ (67 aa)) are compositionally biased toward pro residues. Residues 2999–3014 (NRPSVPASASSTNPRT) show a composition bias toward polar residues.

Belongs to the herpesviridae large tegument protein family. Interacts with host CUL1 and CUL4A; these interactions inhibit the E3 ligase activity of cullins. Interacts with inner tegument protein. Interacts with capsid vertex specific component CVC2. Interacts with the major capsid protein/MCP. Interacts with VP16; this interaction is important for outer tegument association to the capsid. May form homodimers. Post-translationally, proteolytically processed, possibly into several polypeptides. Enzymatic activity is only detectable following cleavage of the UL36 protein, which occurs late during viral replication.

It localises to the virion tegument. The protein resides in the host cytoplasm. It is found in the host nucleus. It catalyses the reaction Thiol-dependent hydrolysis of ester, thioester, amide, peptide and isopeptide bonds formed by the C-terminal Gly of ubiquitin (a 76-residue protein attached to proteins as an intracellular targeting signal).. Functionally, large tegument protein that plays multiple roles in the viral cycle. During viral entry, remains associated with the capsid while most of the tegument is detached and participates in the capsid transport toward the host nucleus. Plays a role in the routing of the capsid at the nuclear pore complex and subsequent uncoating. Within the host nucleus, acts as a deneddylase and promotes the degradation of nuclear CRLs (cullin-RING ubiquitin ligases) and thereby stabilizes nuclear CRL substrates, while cytoplasmic CRLs remain unaffected. These modifications prevent host cell cycle S-phase progression and create a favorable environment allowing efficient viral genome replication. Participates later in the secondary envelopment of capsids. Indeed, plays a linker role for the association of the outer viral tegument to the capsids together with the inner tegument protein. This is Large tegument protein deneddylase from Human herpesvirus 1 (strain 17) (HHV-1).